Reading from the N-terminus, the 142-residue chain is Ninjurin-2 (142 aa).

Residues 1–21 (MESARENIDLQPGSSDPRSQP) form a disordered region. At 1-60 (MESARENIDLQPGSSDPRSQPINLNHYATKKSVAESMLDVALFMSNAMRLKAVLEQGPSS) the chain is on the extracellular side. The span at 12–21 (PGSSDPRSQP) shows a compositional bias: polar residues. The segment at 25–37 (NHYATKKSVAESM) is helix alpha1. The segment at 38 to 57 (LDVALFMSNAMRLKAVLEQG) is helix alpha2. Residues 61 to 92 (HYYTTLVTLISLSLLLQVVIGVLLVVIARLNL) traverse the membrane as a helical segment. Topologically, residues 93–96 (NEVE) are cytoplasmic. A helical membrane pass occupies residues 97–126 (KQWRLNQLNNAATILVFFTVVINVFITAFG). Glutamine 103 contacts cholesterol. Residues 127 to 142 (AHKTGFLAARASRNPL) are Extracellular-facing.

The protein belongs to the ninjurin family. Homooligomer; in response to stimuli, homooligomerizes into filaments. In contrast to NINJ1, the filament is curved toward the intracellular space, preventing its circularization on a relatively flat membrane to mediate plasma membrane rupture: curvature is caused by cholesterol-binding at the cytoplasmic leaflet. As to expression, widely expressed. In adult, higher expression in the bone marrow and peripheral blood lymphocytes, medium in the lung, lymph node, thyroid, uterus, thymus, spleen, prostate and skeletal muscle, lower in the liver, placenta, brain, heart and kidney. In embryo, higher expression in the thymus, heart and liver, lower in the spleen, lung, brain and kidney.

It is found in the cell membrane. Its function is as follows. Its role in unclear. In contrast to NINJ1 paralog, does not mediate plasma membrane rupture (cytolysis) downstream of necroptotic and pyroptotic programmed cell death. While it is able to oligomerize and form filaments, filaments are curved toward the intracellular space, preventing circularization to mediate plasma membrane rupture. May act as a homophilic transmembrane adhesion molecule involved in nerve regeneration. Promotes axonal growth. The chain is Ninjurin-2 from Homo sapiens (Human).